We begin with the raw amino-acid sequence, 307 residues long: Porphobilinogen deaminase (307 aa).

At Cys241 the chain carries S-(dipyrrolylmethanemethyl)cysteine.

Belongs to the HMBS family. As to quaternary structure, monomer. Dipyrromethane is required as a cofactor.

It carries out the reaction 4 porphobilinogen + H2O = hydroxymethylbilane + 4 NH4(+). It participates in porphyrin-containing compound metabolism; protoporphyrin-IX biosynthesis; coproporphyrinogen-III from 5-aminolevulinate: step 2/4. Functionally, tetrapolymerization of the monopyrrole PBG into the hydroxymethylbilane pre-uroporphyrinogen in several discrete steps. In Coxiella burnetii (strain CbuG_Q212) (Coxiella burnetii (strain Q212)), this protein is Porphobilinogen deaminase.